A 1274-amino-acid polypeptide reads, in one-letter code: Polycomb protein Sfmbt (1274 aa).

The disordered stretch occupies residues Pro-266–Ala-285. The span at Ser-267–Asn-278 shows a compositional bias: polar residues. The segment at Pro-331 to Arg-366 adopts an FCS-type zinc-finger fold. Zn(2+) contacts are provided by Cys-340, Cys-343, Cys-360, and Cys-364. Residues Thr-381–Ser-394 show a composition bias toward low complexity. Disordered regions lie at residues Thr-381–Gly-401 and Pro-488–Leu-510. Over residues Gly-494–Tyr-509 the composition is skewed to polar residues. 4 MBT repeats span residues Tyr-564–Pro-675, Lys-683–Pro-781, Leu-789–Pro-899, and Phe-907–Pro-1003. Disordered stretches follow at residues Ser-1007–His-1063 and Tyr-1083–Ala-1167. Residues Lys-1019–Lys-1028 show a composition bias toward basic residues. The segment covering Ala-1038–Thr-1050 has biased composition (low complexity). The segment covering Gln-1087 to Gly-1114 has biased composition (acidic residues). 2 stretches are compositionally biased toward polar residues: residues Ser-1117 to His-1128 and Gly-1158 to Ala-1167. The SAM domain maps to Trp-1194–Val-1258.

As to quaternary structure, interacts with pho as a component of the pho-repressive complex (PhoRC).

The protein resides in the nucleus. Polycomb group (PcG) protein that binds to the Polycomb response elements (PREs) found in the regulatory regions of many genes. PcG proteins act by forming multiprotein complexes, which are required to maintain the transcriptionally repressive state of homeotic genes throughout development. PcG proteins are not required to initiate repression, but to maintain it during later stages of development. They probably act via the methylation of histones, rendering chromatin heritably changed in its expressibility. Necessary but not sufficient to recruit a functional PcG repressive complex that represses target genes, suggesting that the recruitment of the distinct PRC1 complex is also required to allow a subsequent repression. The protein is Polycomb protein Sfmbt of Drosophila pseudoobscura pseudoobscura (Fruit fly).